Reading from the N-terminus, the 240-residue chain is Serine protease SplB (240 aa).

A signal peptide spans 1 to 36; that stretch reads MNKNVVIKSLATLTILTSVAGIGTTLVEEVQQTAKA. Residues His-75, Asp-113, and Ser-193 each act as charge relay system in the active site.

Belongs to the peptidase S1B family.

It localises to the secreted. Serine protease that cleaves specifically after the sequence Trp-Glu-Leu-Gln. In Staphylococcus aureus (strain bovine RF122 / ET3-1), this protein is Serine protease SplB (splB).